The primary structure comprises 757 residues: RNA-directed RNA polymerase catalytic subunit (757 aa).

Residues 50–82 (SEKGKWTTNTETGAPQLNPIDGPLPEDNEPSGY) are disordered. Residues 55-64 (WTTNTETGAP) are compositionally biased toward polar residues. Short sequence motifs (nuclear localization signal) lie at residues 187–195 (RKRRVRDNM) and 203–216 (RTIGKKKQRVNKRS). The tract at residues 249–256 (RGFVYFVE) is promoter-binding site. Positions 286–483 (VRKMMTNSQD…GINMSKKKSY (198 aa)) constitute a RdRp catalytic domain.

This sequence belongs to the influenza viruses polymerase PB1 family. In terms of assembly, influenza RNA polymerase is composed of three subunits: PB1, PB2 and PA. Interacts (via N-terminus) with PA (via C-terminus). Interacts (via C-terminus) with PB2 (via N-terminus); this interaction is essential for transcription initiation. Post-translationally, phosphorylated by host PRKCA.

It localises to the host nucleus. The protein localises to the host cytoplasm. It catalyses the reaction RNA(n) + a ribonucleoside 5'-triphosphate = RNA(n+1) + diphosphate. Its function is as follows. RNA-dependent RNA polymerase which is responsible for replication and transcription of virus RNA segments. The transcription of viral mRNAs occurs by a unique mechanism called cap-snatching. 5' methylated caps of cellular mRNAs are cleaved after 10-13 nucleotides by PA. In turn, these short capped RNAs are used as primers by PB1 for transcription of viral mRNAs. During virus replication, PB1 initiates RNA synthesis and copy vRNA into complementary RNA (cRNA) which in turn serves as a template for the production of more vRNAs. The chain is RNA-directed RNA polymerase catalytic subunit from Aves (whales).